A 146-amino-acid chain; its full sequence is Globin-1 (146 aa).

Residues 9–146 form the Globin domain; the sequence is QLTADVKKDL…KLVAVVQAAL (138 aa). H101 lines the heme b pocket.

The protein belongs to the globin family. As to quaternary structure, homodimer.

The protein resides in the cytoplasm. The polypeptide is Globin-1 (Anadara inaequivalvis (Inequivalve ark)).